A 411-amino-acid polypeptide reads, in one-letter code: Protrudin (411 aa).

The interval 1 to 27 (MQTSEREGSGPELSPSVMPEAPLESPP) is disordered. Residues 1–66 (MQTSEREGSG…AGDGVRYLLR (66 aa)) are Cytoplasmic-facing. Residues 1–92 (MQTSEREGSG…LFLTLNEGAW (92 aa)) form a sufficient for homooligomerization region. Residues 1-205 (MQTSEREGSG…LYLLPLCWVL (205 aa)) form a sufficient for localization to endoplasmic reticulum tubular network and for interactions with REEP1, REEP5, ATL1, ATL2, ATL3 and SPAST region. The tract at residues 51-64 (LEPLKDAGDGVRYL) is necessary for interaction with RAB11A and function in neurite outgrowth. Residues 67–87 (WQMPLCSLLTCLGLNVLFLTL) form a helical membrane-spanning segment. Position 88 (asparagine 88) is a topological domain, lumenal. A helical transmembrane segment spans residues 89–109 (EGAWYSVGALMISVPALLGYL). Over 110–187 (QEVCRARLPD…NPVVSSQFYG (78 aa)) the chain is Cytoplasmic. An intramembrane region (helical) is located at residues 188–208 (ALLGTVCMLYLLPLCWVLTLL). Topologically, residues 209–411 (NSTLFLGNVE…CASCNQTLSK (203 aa)) are cytoplasmic. The interval 234-286 (MNPKQEEHAFESPPPPDVGGKDGLMDSTPALTPTEDLTPGSVEEAEEAEPDEE) is disordered. A necessary for interaction with KIF5A region spans residues 271-361 (TPGSVEEAEE…GCSATFSVLK (91 aa)). Positions 276–286 (EEAEEAEPDEE) are enriched in acidic residues. The segment at 286–292 (EFKDAIE) is necessary for interaction with VAPA and function in cell projections formation. The FYVE-type zinc finger occupies 344–410 (TNNFGNCTGC…VCASCNQTLS (67 aa)). Residues cysteine 350, cysteine 353, cysteine 366, cysteine 369, cysteine 374, cysteine 377, cysteine 402, and cysteine 405 each coordinate Zn(2+).

As to quaternary structure, can form homooligomers (monomers, dimers and tetramers). Interacts with RAB11A (GDP-bound form); regulates RAB11A. Interacts with FKBP8; may negatively regulate ZFYVE27 phosphorylation. Interacts with VAPA (via MSP domain); may regulate ZFYVE27 retention in the endoplasmic reticulum and its function in cell projections formation. Interacts with VAPB (via MSP domain). Interacts with REEP1, REEP5 and ATL1. Interacts with ATL2, ATL3 and SPAST. Interacts with KIF5A and RTN3. Interacts with RAB11B (GDP-bound form), SURF4, KIF5B and KIF5C. In terms of processing, phosphorylated. Phosphorylation is induced by NGF through the MAPK/ERK pathway and modulates interaction with RAB11A.

The protein localises to the recycling endosome membrane. It is found in the endoplasmic reticulum membrane. It localises to the cell projection. The protein resides in the growth cone membrane. Key regulator of RAB11-dependent vesicular trafficking during neurite extension through polarized membrane transport. Promotes axonal elongation and contributes to the establishment of neuronal cell polarity. Involved in nerve growth factor-induced neurite formation in VAPA-dependent manner. Contributes to both the formation and stabilization of the tubular ER network. Involved in ER morphogenesis by regulating the sheet-to-tubule balance and possibly the density of tubule interconnections. Acts as an adapter protein and facilitates the interaction of KIF5A with VAPA, VAPB, SURF4, RAB11A, RAB11B and RTN3 and the ZFYVE27-KIF5A complex contributes to the transport of these proteins in neurons. Can induce formation of neurite-like membrane protrusions in non-neuronal cells in a KIF5A/B-dependent manner. This Homo sapiens (Human) protein is Protrudin (ZFYVE27).